Here is a 177-residue protein sequence, read N- to C-terminus: Large ribosomal subunit protein uL5 (177 aa).

This sequence belongs to the universal ribosomal protein uL5 family. As to quaternary structure, part of the 50S ribosomal subunit; part of the 5S rRNA/L5/L18/L25 subcomplex. Contacts the 5S rRNA and the P site tRNA. Forms a bridge to the 30S subunit in the 70S ribosome.

In terms of biological role, this is one of the proteins that bind and probably mediate the attachment of the 5S RNA into the large ribosomal subunit, where it forms part of the central protuberance. In the 70S ribosome it contacts protein S13 of the 30S subunit (bridge B1b), connecting the 2 subunits; this bridge is implicated in subunit movement. Contacts the P site tRNA; the 5S rRNA and some of its associated proteins might help stabilize positioning of ribosome-bound tRNAs. The sequence is that of Large ribosomal subunit protein uL5 from Wolbachia pipientis wMel.